We begin with the raw amino-acid sequence, 264 residues long: Tryptophan synthase alpha chain (264 aa).

Active-site proton acceptor residues include Glu44 and Asp55.

This sequence belongs to the TrpA family. As to quaternary structure, tetramer of two alpha and two beta chains.

The catalysed reaction is (1S,2R)-1-C-(indol-3-yl)glycerol 3-phosphate + L-serine = D-glyceraldehyde 3-phosphate + L-tryptophan + H2O. It participates in amino-acid biosynthesis; L-tryptophan biosynthesis; L-tryptophan from chorismate: step 5/5. The alpha subunit is responsible for the aldol cleavage of indoleglycerol phosphate to indole and glyceraldehyde 3-phosphate. This chain is Tryptophan synthase alpha chain, found in Lactiplantibacillus plantarum (strain ATCC BAA-793 / NCIMB 8826 / WCFS1) (Lactobacillus plantarum).